The primary structure comprises 337 residues: Nucleoid-associated protein Avin_11450 (337 aa).

It belongs to the YejK family.

It is found in the cytoplasm. It localises to the nucleoid. The protein is Nucleoid-associated protein Avin_11450 of Azotobacter vinelandii (strain DJ / ATCC BAA-1303).